A 476-amino-acid polypeptide reads, in one-letter code: Vitamin D-binding protein (476 aa).

Residues 1–16 form the signal peptide; that stretch reads MKRVLVLLLALAFGHA. Albumin domains follow at residues 17–208, 209–394, and 395–476; these read LERG…QMKQ, LLLL…LMKR, and QLTS…ILQS. 14 disulfide bridges follow: Cys29-Cys75, Cys74-Cys83, Cys96-Cys112, Cys111-Cys122, Cys145-Cys190, Cys189-Cys198, Cys220-Cys266, Cys265-Cys273, Cys286-Cys300, Cys299-Cys311, Cys335-Cys376, Cys375-Cys384, Cys407-Cys453, and Cys452-Cys462. Residue Asn288 is glycosylated (N-linked (GlcNAc...) asparagine). Position 434 is a phosphoserine (Ser434).

The protein belongs to the ALB/AFP/VDB family. As to quaternary structure, associates with membrane-bound immunoglobulin on the surface of B-lymphocytes and with IgG Fc receptor on the membranes of T-lymphocytes. Interacts with LRP2; the interaction is required for renal uptake of GC in complex with 25-hydroxyvitamin D3.

It is found in the secreted. Its function is as follows. Involved in vitamin D transport and storage, scavenging of extracellular G-actin, enhancement of the chemotactic activity of C5 alpha for neutrophils in inflammation and macrophage activation. In Rattus norvegicus (Rat), this protein is Vitamin D-binding protein (Gc).